The chain runs to 449 residues: Gamma-aminobutyric acid receptor subunit delta (449 aa).

Residues 1-24 (MDVLGWLLLPLLLLCTQPHHGARA) form the signal peptide. At 25 to 251 (MNDIGDYVGS…QLRRNRGVYI (227 aa)) the chain is on the extracellular side. N-linked (GlcNAc...) asparagine glycans are attached at residues Asn103 and Asn106. Cysteines 164 and 178 form a disulfide. The helical transmembrane segment at 252-271 (IQSYMPSVLLVAMSWVSFWI) threads the bilayer. The Cytoplasmic portion of the chain corresponds to 272 to 275 (SQAA). Residues 276–298 (VPARVSLGITTVLTMTTLMVSAR) traverse the membrane as a helical segment. The Extracellular segment spans residues 299-308 (SSLPRASAIK). Residues 309–331 (ALDVYFWICYVFVFAALVEYAFA) form a helical membrane-spanning segment. The Cytoplasmic portion of the chain corresponds to 332 to 423 (HFNADYRKKR…SRLKPIDADT (92 aa)). The residue at position 390 (Ser390) is a Phosphoserine. Residues 424-446 (IDIYARAVFPAAFAAVNIIYWAA) form a helical membrane-spanning segment. The Extracellular portion of the chain corresponds to 447-449 (YTM).

It belongs to the ligand-gated ion channel (TC 1.A.9) family. Gamma-aminobutyric acid receptor (TC 1.A.9.5) subfamily. GABRD sub-subfamily. As to quaternary structure, heteropentamer, formed by a combination of alpha (GABRA1-6), beta (GABRB1-3), gamma (GABRG1-3), delta (GABRD), epsilon (GABRE), rho (GABRR1-3), pi (GABRP) and theta (GABRQ) chains, each subunit exhibiting distinct physiological and pharmacological properties.

It is found in the cell membrane. It carries out the reaction chloride(in) = chloride(out). Delta subunit of the heteropentameric ligand-gated chloride channel gated by gamma-aminobutyric acid (GABA), a major inhibitory neurotransmitter in the brain. GABA-gated chloride channels, also named GABA(A) receptors (GABAAR), consist of five subunits arranged around a central pore and contain GABA active binding site(s) located at the alpha and beta subunit interface(s). When activated by GABA, GABAARs selectively allow the flow of chloride anions across the cell membrane down their electrochemical gradient. GABAARs containing delta/GABRD subunits are predominantly expressed and located in extrasynaptic or perisynaptic positions on hippocampus and cerebellar granule cells, and contribute to the tonic GABAergic inhibition. GABAAR containing alpha-4-beta-3-delta subunits can simultaneously bind GABA and histamine where histamine binds at the interface of two neighboring beta subunits, which may be involved in the regulation of sleep and wakefulness. This Mus musculus (Mouse) protein is Gamma-aminobutyric acid receptor subunit delta.